We begin with the raw amino-acid sequence, 304 residues long: Tritrans,polycis-undecaprenyl-diphosphate synthase (geranylgeranyl-diphosphate specific) (304 aa).

D33 is an active-site residue. A Mg(2+)-binding site is contributed by D33. Substrate-binding positions include 34–37 (GNRR), K46, H50, and 78–80 (STE). N81 serves as the catalytic Proton acceptor. Residues F82, R84, R203, and 209-211 (RTS) each bind substrate.

The protein belongs to the UPP synthase family. As to quaternary structure, homodimer. Mg(2+) serves as cofactor.

It carries out the reaction geranylgeranyl diphosphate + 7 isopentenyl diphosphate = tri-trans,hepta-cis-undecaprenyl diphosphate + 7 diphosphate. Functionally, catalyzes the sequential condensation of isopentenyl diphosphate (IPP) with geranylgeranyl diphosphate (GGPP) to yield (2Z,6Z,10Z,14Z,18Z,22Z,26Z,30E,34E,38E)-undecaprenyl diphosphate (tritrans,heptacis-UPP). It is probably the precursor of glycosyl carrier lipids. The protein is Tritrans,polycis-undecaprenyl-diphosphate synthase (geranylgeranyl-diphosphate specific) of Haloarcula marismortui (strain ATCC 43049 / DSM 3752 / JCM 8966 / VKM B-1809) (Halobacterium marismortui).